A 706-amino-acid polypeptide reads, in one-letter code: Methionine--tRNA ligase (706 aa).

The 'HIGH' region signature appears at 13 to 23 (PYANGNFHIGH). Residues Cys144, Cys147, Cys157, and Cys160 each coordinate Zn(2+). The short motif at 341 to 345 (KMSKS) is the 'KMSKS' region element. Lys344 contributes to the ATP binding site. In terms of domain architecture, tRNA-binding spans 600–706 (DFAKIDLRIA…PGATPGMRVR (107 aa)).

This sequence belongs to the class-I aminoacyl-tRNA synthetase family. MetG type 1 subfamily. As to quaternary structure, homodimer. Zn(2+) is required as a cofactor.

It is found in the cytoplasm. It carries out the reaction tRNA(Met) + L-methionine + ATP = L-methionyl-tRNA(Met) + AMP + diphosphate. Functionally, is required not only for elongation of protein synthesis but also for the initiation of all mRNA translation through initiator tRNA(fMet) aminoacylation. The polypeptide is Methionine--tRNA ligase (Paracidovorax citrulli (strain AAC00-1) (Acidovorax citrulli)).